A 359-amino-acid chain; its full sequence is tRNA N6-adenosine threonylcarbamoyltransferase (359 aa).

Fe cation is bound by residues histidine 121 and histidine 125. Residues 143 to 147 (LVSGG), aspartate 176, glycine 189, and asparagine 286 contribute to the substrate site. Aspartate 311 lines the Fe cation pocket.

The protein belongs to the KAE1 / TsaD family. The cofactor is Fe(2+).

It localises to the cytoplasm. The enzyme catalyses L-threonylcarbamoyladenylate + adenosine(37) in tRNA = N(6)-L-threonylcarbamoyladenosine(37) in tRNA + AMP + H(+). Required for the formation of a threonylcarbamoyl group on adenosine at position 37 (t(6)A37) in tRNAs that read codons beginning with adenine. Is involved in the transfer of the threonylcarbamoyl moiety of threonylcarbamoyl-AMP (TC-AMP) to the N6 group of A37, together with TsaE and TsaB. TsaD likely plays a direct catalytic role in this reaction. This is tRNA N6-adenosine threonylcarbamoyltransferase from Jannaschia sp. (strain CCS1).